A 450-amino-acid chain; its full sequence is Putative MYST-like histone acetyltransferase 1 (450 aa).

Residues 63-122 form the Tudor-knot domain; sequence LEVGTRVMCRWRDQKLHPVKVIERRKSSTSSSPADYEYYVHYTEFNRRLDEWVKLEQLDL. An MYST-type HAT domain is found at 174–445; it reads TKVKNIAKIE…VDVSKLIWTP (272 aa). The C2HC MYST-type zinc finger occupies 207–232; the sequence is LFFCEFCLNFMKRKEQLQRHMKKCDL. K274 bears the N6-acetyllysine; by autocatalysis mark. Acetyl-CoA-binding positions include 317-319 and 324-330; these read ILT and QRKGYGK. E350 functions as the Proton donor/acceptor in the catalytic mechanism. S354 serves as a coordination point for acetyl-CoA.

It belongs to the MYST (SAS/MOZ) family. In terms of processing, autoacetylation at Lys-274 is required for proper function.

It localises to the nucleus. The enzyme catalyses L-lysyl-[protein] + acetyl-CoA = N(6)-acetyl-L-lysyl-[protein] + CoA + H(+). Its function is as follows. Histone acetyltransferase which may be involved in transcriptional activation. The polypeptide is Putative MYST-like histone acetyltransferase 1 (Oryza sativa subsp. japonica (Rice)).